A 210-amino-acid chain; its full sequence is Putative Dihydrofolate reductase (210 aa).

The region spanning 4 to 184 is the DHFR domain; sequence TLYCVVAVDT…IFYMFETYIK (181 aa).

Belongs to the dihydrofolate reductase family.

It catalyses the reaction (6S)-5,6,7,8-tetrahydrofolate + NADP(+) = 7,8-dihydrofolate + NADPH + H(+). The chain is Putative Dihydrofolate reductase (ORF2) from Human herpesvirus 8 type P (isolate GK18) (HHV-8).